A 244-amino-acid chain; its full sequence is uncharacterized protein (244 aa).

The N-terminal stretch at 1-17 (MVLHVITALLSIGLCYG) is a signal peptide.

Component of the acid-soluble and acid-insoluble organic matrix of prismatic shell layers (at protein level).

It is found in the secreted. This is an uncharacterized protein from Haliotis asinina (Donkey's ear abalone).